A 102-amino-acid chain; its full sequence is Large ribosomal subunit protein bL21 (102 aa).

Belongs to the bacterial ribosomal protein bL21 family. In terms of assembly, part of the 50S ribosomal subunit. Contacts protein L20.

In terms of biological role, this protein binds to 23S rRNA in the presence of protein L20. The sequence is that of Large ribosomal subunit protein bL21 from Shouchella clausii (strain KSM-K16) (Alkalihalobacillus clausii).